We begin with the raw amino-acid sequence, 445 residues long: Trigger factor (445 aa).

In terms of domain architecture, PPIase FKBP-type spans 172–257 (GDQVVINFVG…VKSVNWAHLP (86 aa)).

The protein belongs to the FKBP-type PPIase family. Tig subfamily.

It is found in the cytoplasm. The catalysed reaction is [protein]-peptidylproline (omega=180) = [protein]-peptidylproline (omega=0). In terms of biological role, involved in protein export. Acts as a chaperone by maintaining the newly synthesized protein in an open conformation. Functions as a peptidyl-prolyl cis-trans isomerase. This chain is Trigger factor, found in Polynucleobacter necessarius subsp. necessarius (strain STIR1).